The sequence spans 426 residues: Glutamate-1-semialdehyde 2,1-aminomutase (426 aa).

N6-(pyridoxal phosphate)lysine is present on lysine 265.

The protein belongs to the class-III pyridoxal-phosphate-dependent aminotransferase family. HemL subfamily. In terms of assembly, homodimer. Requires pyridoxal 5'-phosphate as cofactor.

The protein resides in the cytoplasm. The catalysed reaction is (S)-4-amino-5-oxopentanoate = 5-aminolevulinate. It functions in the pathway porphyrin-containing compound metabolism; protoporphyrin-IX biosynthesis; 5-aminolevulinate from L-glutamyl-tRNA(Glu): step 2/2. This is Glutamate-1-semialdehyde 2,1-aminomutase from Salmonella newport (strain SL254).